The sequence spans 294 residues: Tryptophan 2,3-dioxygenase (294 aa).

Residues 1–20 (MSEFKGCPFSGAASEAGTKA) are disordered. Substrate contacts are provided by residues 63-67 (FIVQH), Tyr-125, and Arg-129. Position 252 (His-252) interacts with heme. Substrate is bound at residue Thr-266.

Belongs to the tryptophan 2,3-dioxygenase family. In terms of assembly, homotetramer. Heme is required as a cofactor.

The enzyme catalyses L-tryptophan + O2 = N-formyl-L-kynurenine. It functions in the pathway amino-acid degradation; L-tryptophan degradation via kynurenine pathway; L-kynurenine from L-tryptophan: step 1/2. Heme-dependent dioxygenase that catalyzes the oxidative cleavage of the L-tryptophan (L-Trp) pyrrole ring and converts L-tryptophan to N-formyl-L-kynurenine. Catalyzes the oxidative cleavage of the indole moiety. The chain is Tryptophan 2,3-dioxygenase from Cupriavidus necator (strain ATCC 17699 / DSM 428 / KCTC 22496 / NCIMB 10442 / H16 / Stanier 337) (Ralstonia eutropha).